The primary structure comprises 71 residues: DPSGSPHIRILPQETFEDICRLPSDSGDCLRFFEMWYFDGTTCTKFVYGGYGGNDNRFPTEKACMKRCAKA.

Residues 1 to 22 (DPSGSPHIRILPQETFEDICRL) form the signal peptide. Disulfide bonds link Cys-20/Cys-68 and Cys-43/Cys-64. The BPTI/Kunitz inhibitor domain maps to 23-68 (PSDSGDCLRFFEMWYFDGTTCTKFVYGGYGGNDNRFPTEKACMKRC).

This sequence belongs to the venom Kunitz-type family. 03 (sub-Kunitz) subfamily. In terms of tissue distribution, expressed by the venom gland.

It is found in the secreted. Its function is as follows. Serine protease inhibitor that inhibits trypsin at a molar ratio of 1:1. This Cyriopagopus hainanus (Chinese bird spider) protein is Kunitz-type serine protease inhibitor HNTX-852.